The primary structure comprises 148 residues: Deoxyuridine 5'-triphosphate nucleotidohydrolase (148 aa).

Substrate-binding positions include 67-69 (RSG), asparagine 80, 84-86 (LID), and methionine 94.

This sequence belongs to the dUTPase family. Mg(2+) is required as a cofactor.

The enzyme catalyses dUTP + H2O = dUMP + diphosphate + H(+). It participates in pyrimidine metabolism; dUMP biosynthesis; dUMP from dCTP (dUTP route): step 2/2. In terms of biological role, this enzyme is involved in nucleotide metabolism: it produces dUMP, the immediate precursor of thymidine nucleotides and it decreases the intracellular concentration of dUTP so that uracil cannot be incorporated into DNA. The sequence is that of Deoxyuridine 5'-triphosphate nucleotidohydrolase from Paraburkholderia phymatum (strain DSM 17167 / CIP 108236 / LMG 21445 / STM815) (Burkholderia phymatum).